Here is a 199-residue protein sequence, read N- to C-terminus: B3 domain-containing protein Os06g0107800 (199 aa).

The tract at residues 13–32 (QLQGGGGGHGGGGGGGGGER) is disordered. Residues 15–29 (QGGGGGHGGGGGGGG) show a composition bias toward gly residues. The TF-B3 DNA-binding region spans 37–141 (FEKVVTPSDV…RLFIDCRKRA (105 aa)).

Its subcellular location is the nucleus. This chain is B3 domain-containing protein Os06g0107800, found in Oryza sativa subsp. japonica (Rice).